A 400-amino-acid polypeptide reads, in one-letter code: Enoyl-[acyl-carrier-protein] reductase [NADH] (400 aa).

Residues 48–53, 74–75, 111–112, and 139–140 each bind NAD(+); these read GASTGY, FE, DA, and LA. Residue Tyr-225 coordinates substrate. The Proton donor role is filled by Tyr-235. Residues Lys-244 and 273–275 each bind NAD(+); that span reads VVT.

It belongs to the TER reductase family. As to quaternary structure, monomer.

It catalyses the reaction a 2,3-saturated acyl-[ACP] + NAD(+) = a (2E)-enoyl-[ACP] + NADH + H(+). It functions in the pathway lipid metabolism; fatty acid biosynthesis. Involved in the final reduction of the elongation cycle of fatty acid synthesis (FAS II). Catalyzes the reduction of a carbon-carbon double bond in an enoyl moiety that is covalently linked to an acyl carrier protein (ACP). This is Enoyl-[acyl-carrier-protein] reductase [NADH] from Burkholderia cenocepacia (strain ATCC BAA-245 / DSM 16553 / LMG 16656 / NCTC 13227 / J2315 / CF5610) (Burkholderia cepacia (strain J2315)).